A 306-amino-acid polypeptide reads, in one-letter code: Dihydroorotate dehydrogenase B (NAD(+)), catalytic subunit (306 aa).

FMN is bound by residues Ser23 and 47 to 48; that span reads KS. Residues Lys47, 71 to 75, and Asn130 contribute to the substrate site; that span reads NAMGL. Asn130 contributes to the FMN binding site. Cys133 serves as the catalytic Nucleophile. FMN-binding residues include Lys168 and Ile194. Substrate is bound at residue 195-196; sequence NT. FMN is bound by residues Gly220, 246-247, and 268-269; these read GG and GS.

This sequence belongs to the dihydroorotate dehydrogenase family. Type 1 subfamily. In terms of assembly, heterotetramer of 2 PyrK and 2 PyrD type B subunits. Requires FMN as cofactor.

It is found in the cytoplasm. It catalyses the reaction (S)-dihydroorotate + NAD(+) = orotate + NADH + H(+). Its pathway is pyrimidine metabolism; UMP biosynthesis via de novo pathway; orotate from (S)-dihydroorotate (NAD(+) route): step 1/1. In terms of biological role, catalyzes the conversion of dihydroorotate to orotate with NAD(+) as electron acceptor. This is Dihydroorotate dehydrogenase B (NAD(+)), catalytic subunit (pyrD) from Methanocaldococcus jannaschii (strain ATCC 43067 / DSM 2661 / JAL-1 / JCM 10045 / NBRC 100440) (Methanococcus jannaschii).